The sequence spans 119 residues: MIQKNTLLEVADNSGARAVLCIGLLGGRKSASIGDTVIVSTKSITPRGKVEKGKVYRAVVVRVKSPIRKSDGSVIRFSSNAVVLINDQGEPLGTRVFGPVKKLSSGSFMKIMSLAVEVL.

Belongs to the universal ribosomal protein uL14 family. In terms of assembly, part of the 50S ribosomal subunit. Forms a cluster with proteins L3 and L19. In the 70S ribosome, L14 and L19 interact and together make contacts with the 16S rRNA in bridges B5 and B8.

Functionally, binds to 23S rRNA. Forms part of two intersubunit bridges in the 70S ribosome. This is Large ribosomal subunit protein uL14 from Wolbachia pipientis wMel.